The following is a 63-amino-acid chain: Transmembrane protein ZNF593OS (63 aa).

The helical transmembrane segment at 30–50 (LAGVVATVLAVLGLGGSCYAV) threads the bilayer.

The protein resides in the membrane. This is Transmembrane protein ZNF593OS from Homo sapiens (Human).